The following is a 287-amino-acid chain: Iodotyrosine deiodinase (287 aa).

Residues 15–34 form a helical membrane-spanning segment; it reads HWPSLFITLALIWIVKRLFF. FMN contacts are provided by residues 96–100, Ser-125, and 125–126; these read RRSIR and SG. 3,5-diiodo-L-tyrosine-binding residues include Ala-127, Glu-154, Tyr-158, and Lys-179. Ala-127, Glu-154, Tyr-158, and Lys-179 together coordinate 3-iodo-L-tyrosine. FMN is bound by residues 235 to 237 and Arg-277; that span reads VTT.

The protein belongs to the nitroreductase family. In terms of assembly, homodimer. Requires FMN as cofactor. As to expression, expressed in spermatocytes.

The protein localises to the cell membrane. The enzyme catalyses 2 iodide + L-tyrosine + 2 NADP(+) = 3,5-diiodo-L-tyrosine + 2 NADPH + H(+). It catalyses the reaction iodide + L-tyrosine + NADP(+) = 3-iodo-L-tyrosine + NADPH. The catalysed reaction is 3-iodo-L-tyrosine + iodide + NADP(+) = 3,5-diiodo-L-tyrosine + NADPH + H(+). It carries out the reaction L-tyrosine + chloride + NADP(+) = 3-chloro-L-tyrosine + NADPH. The enzyme catalyses bromide + L-tyrosine + NADP(+) = 3-bromo-L-tyrosine + NADPH. Functionally, catalyzes the dehalogenation of halotyrosines such as 3-bromo-L-tyrosine, 3-chloro-L-tyrosine, 3-iodo-L-tyrosine and 3,5-diiodo-L-tyrosine. Activity towards 3-fluoro-L-tyrosine is weak. Important for male and female fertility. May be involved in maintaining the viability of sperm, both during development in the testes and storage in the female spermatheca. This Drosophila melanogaster (Fruit fly) protein is Iodotyrosine deiodinase.